The primary structure comprises 101 residues: Small ribosomal subunit protein uS14 (101 aa).

Belongs to the universal ribosomal protein uS14 family. Part of the 30S ribosomal subunit. Contacts proteins S3 and S10.

Functionally, binds 16S rRNA, required for the assembly of 30S particles and may also be responsible for determining the conformation of the 16S rRNA at the A site. The polypeptide is Small ribosomal subunit protein uS14 (Francisella tularensis subsp. novicida (strain U112)).